The chain runs to 323 residues: Tyrosine--tRNA ligase (323 aa).

An L-tyrosine-binding site is contributed by Tyr36. Residues 41–49 carry the 'HIGH' region motif; the sequence is PSGEIHLGH. L-tyrosine-binding residues include Tyr158, Gln162, Asp165, and Gln180. A 'KMSKS' region motif is present at residues 214 to 218; sequence KMSSS. Ser217 serves as a coordination point for ATP.

It belongs to the class-I aminoacyl-tRNA synthetase family. TyrS type 3 subfamily. Homodimer.

Its subcellular location is the cytoplasm. The catalysed reaction is tRNA(Tyr) + L-tyrosine + ATP = L-tyrosyl-tRNA(Tyr) + AMP + diphosphate + H(+). Catalyzes the attachment of tyrosine to tRNA(Tyr) in a two-step reaction: tyrosine is first activated by ATP to form Tyr-AMP and then transferred to the acceptor end of tRNA(Tyr). The polypeptide is Tyrosine--tRNA ligase (Archaeoglobus fulgidus (strain ATCC 49558 / DSM 4304 / JCM 9628 / NBRC 100126 / VC-16)).